The primary structure comprises 102 residues: Small ribosomal subunit protein uS10 (102 aa).

The protein belongs to the universal ribosomal protein uS10 family. In terms of assembly, part of the 30S ribosomal subunit.

In terms of biological role, involved in the binding of tRNA to the ribosomes. This Bacillus cereus (strain G9842) protein is Small ribosomal subunit protein uS10.